A 184-amino-acid polypeptide reads, in one-letter code: Acetyl-CoA decarbonylase/synthase complex subunit epsilon 1 (184 aa).

The protein belongs to the CdhB family. As to quaternary structure, heterotetramer of two alpha and two epsilon subunits. The ACDS complex is made up of alpha, epsilon, beta, gamma and delta subunits with a probable stoichiometry of (alpha(2)epsilon(2))(4)-beta(8)-(gamma(1)delta(1))(8).

In terms of biological role, part of a complex that catalyzes the reversible cleavage of acetyl-CoA, allowing autotrophic growth from CO(2). The alpha-epsilon subcomponent functions as a carbon monoxide dehydrogenase. The precise role of the epsilon subunit is unclear; it may have a stabilizing role within the alpha(2)epsilon(2) component and/or be involved in electron transfer to FAD during a potential FAD-mediated CO oxidation. The chain is Acetyl-CoA decarbonylase/synthase complex subunit epsilon 1 (cdhB1) from Archaeoglobus fulgidus (strain ATCC 49558 / DSM 4304 / JCM 9628 / NBRC 100126 / VC-16).